We begin with the raw amino-acid sequence, 159 residues long: Ribosomal RNA large subunit methyltransferase H (159 aa).

S-adenosyl-L-methionine contacts are provided by residues Leu-76, Gly-108, and 127 to 132; that span reads FGLLTL.

It belongs to the RNA methyltransferase RlmH family. As to quaternary structure, homodimer.

Its subcellular location is the cytoplasm. It carries out the reaction pseudouridine(1915) in 23S rRNA + S-adenosyl-L-methionine = N(3)-methylpseudouridine(1915) in 23S rRNA + S-adenosyl-L-homocysteine + H(+). Specifically methylates the pseudouridine at position 1915 (m3Psi1915) in 23S rRNA. This chain is Ribosomal RNA large subunit methyltransferase H, found in Leuconostoc mesenteroides subsp. mesenteroides (strain ATCC 8293 / DSM 20343 / BCRC 11652 / CCM 1803 / JCM 6124 / NCDO 523 / NBRC 100496 / NCIMB 8023 / NCTC 12954 / NRRL B-1118 / 37Y).